The chain runs to 202 residues: Small ribosomal subunit protein uS4c (202 aa).

The 64-residue stretch at 90–153 folds into the S4 RNA-binding domain; sequence MRLDNIIFRL…KSEAIISKNI (64 aa).

This sequence belongs to the universal ribosomal protein uS4 family. As to quaternary structure, part of the 30S ribosomal subunit. Contacts protein S5. The interaction surface between S4 and S5 is involved in control of translational fidelity.

It is found in the plastid. Its subcellular location is the chloroplast. Its function is as follows. One of the primary rRNA binding proteins, it binds directly to 16S rRNA where it nucleates assembly of the body of the 30S subunit. Functionally, with S5 and S12 plays an important role in translational accuracy. The protein is Small ribosomal subunit protein uS4c (rps4) of Leucodon sciuroides (Moss).